The following is a 316-amino-acid chain: Protoheme IX farnesyltransferase (316 aa).

Helical transmembrane passes span tryptophan 28–methionine 48, isoleucine 57–isoleucine 77, alanine 106–threonine 126, leucine 129–leucine 149, asparagine 156–methionine 176, methionine 179–tryptophan 199, isoleucine 230–valine 250, tyrosine 254–methionine 274, and tyrosine 296–glycine 316.

The protein belongs to the UbiA prenyltransferase family. Protoheme IX farnesyltransferase subfamily.

The protein localises to the cell inner membrane. The enzyme catalyses heme b + (2E,6E)-farnesyl diphosphate + H2O = Fe(II)-heme o + diphosphate. It functions in the pathway porphyrin-containing compound metabolism; heme O biosynthesis; heme O from protoheme: step 1/1. Its function is as follows. Converts heme B (protoheme IX) to heme O by substitution of the vinyl group on carbon 2 of heme B porphyrin ring with a hydroxyethyl farnesyl side group. This chain is Protoheme IX farnesyltransferase, found in Gluconobacter oxydans (strain 621H) (Gluconobacter suboxydans).